We begin with the raw amino-acid sequence, 207 residues long: MARYTGPKAKLSRREGTDLFLKSSRRSLADKCKLDSKPGQHGRTSGARTSDYGNQLREKQKVKRIYGVLERQFRRYFAEADRRKGNTGENLLQLLESRLDNVVYRMGFGSTRAEARQLVSHKAILVNGQTLNVPSAQIKSGDVITIREQSKKQVRIAEALSLAEQSGFPTWVAVDAKKFEGTFKQVPDRADISGDINESLIVELYSR.

The interval 30-54 (DKCKLDSKPGQHGRTSGARTSDYGN) is disordered. Residues 42–53 (GRTSGARTSDYG) are compositionally biased toward polar residues. One can recognise an S4 RNA-binding domain in the interval 97-160 (SRLDNVVYRM…KKQVRIAEAL (64 aa)).

Belongs to the universal ribosomal protein uS4 family. As to quaternary structure, part of the 30S ribosomal subunit. Contacts protein S5. The interaction surface between S4 and S5 is involved in control of translational fidelity.

One of the primary rRNA binding proteins, it binds directly to 16S rRNA where it nucleates assembly of the body of the 30S subunit. Its function is as follows. With S5 and S12 plays an important role in translational accuracy. This Cupriavidus taiwanensis (strain DSM 17343 / BCRC 17206 / CCUG 44338 / CIP 107171 / LMG 19424 / R1) (Ralstonia taiwanensis (strain LMG 19424)) protein is Small ribosomal subunit protein uS4.